A 159-amino-acid polypeptide reads, in one-letter code: UPF0262 protein TM1040_3562 (159 aa).

Residues Met-1 to Ile-21 are disordered.

Belongs to the UPF0262 family.

This is UPF0262 protein TM1040_3562 from Ruegeria sp. (strain TM1040) (Silicibacter sp.).